We begin with the raw amino-acid sequence, 445 residues long: D-serine dehydratase (445 aa).

The residue at position 118 (K118) is an N6-(pyridoxal phosphate)lysine.

Belongs to the serine/threonine dehydratase family. DsdA subfamily. As to quaternary structure, monomer. Pyridoxal 5'-phosphate serves as cofactor.

The catalysed reaction is D-serine = pyruvate + NH4(+). This chain is D-serine dehydratase, found in Serratia proteamaculans (strain 568).